The chain runs to 469 residues: Ribonuclease Y (469 aa).

Residues V6–I26 traverse the membrane as a helical segment. The 61-residue stretch at F149 to M209 folds into the KH domain. The region spanning V276 to S369 is the HD domain.

The protein belongs to the RNase Y family.

The protein resides in the cell membrane. Functionally, endoribonuclease that initiates mRNA decay. In Malacoplasma penetrans (strain HF-2) (Mycoplasma penetrans), this protein is Ribonuclease Y.